A 145-amino-acid chain; its full sequence is 3-hydroxyacyl-[acyl-carrier-protein] dehydratase FabZ (145 aa).

The active site involves H47.

Belongs to the thioester dehydratase family. FabZ subfamily.

The protein resides in the cytoplasm. The enzyme catalyses a (3R)-hydroxyacyl-[ACP] = a (2E)-enoyl-[ACP] + H2O. Involved in unsaturated fatty acids biosynthesis. Catalyzes the dehydration of short chain beta-hydroxyacyl-ACPs and long chain saturated and unsaturated beta-hydroxyacyl-ACPs. The chain is 3-hydroxyacyl-[acyl-carrier-protein] dehydratase FabZ from Vesicomyosocius okutanii subsp. Calyptogena okutanii (strain HA).